The chain runs to 212 residues: Phosphoenolpyruvate guanylyltransferase (212 aa).

Phosphoenolpyruvate-binding residues include Thr-139, Gly-155, and Ser-158.

Belongs to the CofC family.

The catalysed reaction is phosphoenolpyruvate + GTP + H(+) = enolpyruvoyl-2-diphospho-5'-guanosine + diphosphate. It participates in cofactor biosynthesis; coenzyme F420 biosynthesis. In terms of biological role, guanylyltransferase that catalyzes the activation of phosphoenolpyruvate (PEP) as enolpyruvoyl-2-diphospho-5'-guanosine, via the condensation of PEP with GTP. It is involved in the biosynthesis of coenzyme F420, a hydride carrier cofactor. This chain is Phosphoenolpyruvate guanylyltransferase, found in Streptomyces coelicolor (strain ATCC BAA-471 / A3(2) / M145).